Consider the following 212-residue polypeptide: Adenylate kinase (212 aa).

Position 10 to 15 (10 to 15) interacts with ATP; that stretch reads GAGKGT. An NMP region spans residues 30 to 59; sequence STGDMFRAAMANQTEMGVLAKSYIDKGELV. AMP contacts are provided by residues Thr-31, Arg-36, 57–59, 86–89, and Gln-93; these read ELV and GYPR. An LID region spans residues 127–159; that stretch reads GRIIHRQTGETFHKVFNPPANYNEEDYYQREDD. Residues Arg-128 and 137–138 contribute to the ATP site; that span reads TF. The AMP site is built by Arg-156 and Arg-167. ATP is bound at residue Gln-195.

This sequence belongs to the adenylate kinase family. Monomer.

The protein localises to the cytoplasm. The catalysed reaction is AMP + ATP = 2 ADP. Its pathway is purine metabolism; AMP biosynthesis via salvage pathway; AMP from ADP: step 1/1. Catalyzes the reversible transfer of the terminal phosphate group between ATP and AMP. Plays an important role in cellular energy homeostasis and in adenine nucleotide metabolism. The polypeptide is Adenylate kinase (Streptococcus gordonii (strain Challis / ATCC 35105 / BCRC 15272 / CH1 / DL1 / V288)).